Reading from the N-terminus, the 407-residue chain is Multifunctional CCA protein (407 aa).

ATP contacts are provided by glycine 8 and arginine 11. Residues glycine 8 and arginine 11 each coordinate CTP. Mg(2+)-binding residues include aspartate 21 and aspartate 23. ATP is bound by residues arginine 91, arginine 137, and arginine 140. CTP is bound by residues arginine 91, arginine 137, and arginine 140. The HD domain maps to threonine 228–tryptophan 329.

This sequence belongs to the tRNA nucleotidyltransferase/poly(A) polymerase family. Bacterial CCA-adding enzyme type 1 subfamily. Monomer. Can also form homodimers and oligomers. The cofactor is Mg(2+). Ni(2+) serves as cofactor.

The enzyme catalyses a tRNA precursor + 2 CTP + ATP = a tRNA with a 3' CCA end + 3 diphosphate. The catalysed reaction is a tRNA with a 3' CCA end + 2 CTP + ATP = a tRNA with a 3' CCACCA end + 3 diphosphate. In terms of biological role, catalyzes the addition and repair of the essential 3'-terminal CCA sequence in tRNAs without using a nucleic acid template. Adds these three nucleotides in the order of C, C, and A to the tRNA nucleotide-73, using CTP and ATP as substrates and producing inorganic pyrophosphate. tRNA 3'-terminal CCA addition is required both for tRNA processing and repair. Also involved in tRNA surveillance by mediating tandem CCA addition to generate a CCACCA at the 3' terminus of unstable tRNAs. While stable tRNAs receive only 3'-terminal CCA, unstable tRNAs are marked with CCACCA and rapidly degraded. This is Multifunctional CCA protein from Vibrio vulnificus (strain YJ016).